The chain runs to 64 residues: Large ribosomal subunit protein bL33 (64 aa).

Belongs to the bacterial ribosomal protein bL33 family.

The sequence is that of Large ribosomal subunit protein bL33 from Synechococcus elongatus (strain ATCC 33912 / PCC 7942 / FACHB-805) (Anacystis nidulans R2).